The sequence spans 127 residues: Aspartate 1-decarboxylase (127 aa).

Ser-25 serves as the catalytic Schiff-base intermediate with substrate; via pyruvic acid. Ser-25 is subject to Pyruvic acid (Ser). Thr-57 serves as a coordination point for substrate. Residue Tyr-58 is the Proton donor of the active site. 73–75 (GAA) is a binding site for substrate.

Belongs to the PanD family. In terms of assembly, heterooctamer of four alpha and four beta subunits. It depends on pyruvate as a cofactor. In terms of processing, is synthesized initially as an inactive proenzyme, which is activated by self-cleavage at a specific serine bond to produce a beta-subunit with a hydroxyl group at its C-terminus and an alpha-subunit with a pyruvoyl group at its N-terminus.

It localises to the cytoplasm. The catalysed reaction is L-aspartate + H(+) = beta-alanine + CO2. It functions in the pathway cofactor biosynthesis; (R)-pantothenate biosynthesis; beta-alanine from L-aspartate: step 1/1. Its function is as follows. Catalyzes the pyruvoyl-dependent decarboxylation of aspartate to produce beta-alanine. This is Aspartate 1-decarboxylase from Neisseria meningitidis serogroup C / serotype 2a (strain ATCC 700532 / DSM 15464 / FAM18).